The chain runs to 119 residues: Autophagy-related protein 8A (119 aa).

G117 carries the Phosphatidylethanolamine amidated glycine lipid modification. A propeptide spans 118-119 (SA) (removed in mature form).

Belongs to the ATG8 family. Interacts with ATG4. In terms of processing, the C-terminal 2 residues are removed by ATG4 to expose Gly-117 at the C-terminus. The C-terminal Gly is then amidated with phosphatidylethanolamine by an activating system similar to that for ubiquitin. As to expression, constitutively expressed.

Its subcellular location is the cytoplasmic vesicle. The protein localises to the autophagosome membrane. It is found in the vacuole membrane. It localises to the cytoplasm. The protein resides in the cytoskeleton. In terms of biological role, ubiquitin-like modifier involved in cytoplasm to vacuole transport (Cvt) vesicles and autophagosomes formation. May mediate the delivery of the vesicles and autophagosomes to the vacuole via the microtubule cytoskeleton. Ubiquitin-like modifier involved in autophagosomes formation. May mediate the delivery of the autophagosomes to the vacuole via the microtubule cytoskeleton. This Oryza sativa subsp. indica (Rice) protein is Autophagy-related protein 8A (ATG8A).